The chain runs to 124 residues: Small ribosomal subunit protein uS12 (124 aa).

The residue at position 89 (Asp89) is a 3-methylthioaspartic acid.

Belongs to the universal ribosomal protein uS12 family. In terms of assembly, part of the 30S ribosomal subunit. Contacts proteins S8 and S17. May interact with IF1 in the 30S initiation complex.

Functionally, with S4 and S5 plays an important role in translational accuracy. Its function is as follows. Interacts with and stabilizes bases of the 16S rRNA that are involved in tRNA selection in the A site and with the mRNA backbone. Located at the interface of the 30S and 50S subunits, it traverses the body of the 30S subunit contacting proteins on the other side and probably holding the rRNA structure together. The combined cluster of proteins S8, S12 and S17 appears to hold together the shoulder and platform of the 30S subunit. The protein is Small ribosomal subunit protein uS12 of Acinetobacter baylyi (strain ATCC 33305 / BD413 / ADP1).